The primary structure comprises 821 residues: Glycerol-3-phosphate acyltransferase (821 aa).

The short motif at 310–315 (CHRSHM) is the HXXXXD motif element.

This sequence belongs to the GPAT/DAPAT family.

Its subcellular location is the cell membrane. The enzyme catalyses sn-glycerol 3-phosphate + an acyl-CoA = a 1-acyl-sn-glycero-3-phosphate + CoA. It functions in the pathway phospholipid metabolism; CDP-diacylglycerol biosynthesis; CDP-diacylglycerol from sn-glycerol 3-phosphate: step 1/3. The chain is Glycerol-3-phosphate acyltransferase from Baumannia cicadellinicola subsp. Homalodisca coagulata.